The following is a 308-amino-acid chain: MKFLWAALVVTLLAGCRADVEEEVKLGQEPDRWQAKQPWEQALGRFWEYLRWVQTLSNKVKEELLNSQVTEELKLLIEETMKEVKAYKEELEKQVGPIAQETQARLSKELQAAQARLESDMEDVRTRLAQYRSEAQAALGQNTDDLQGRLASHLRKLRKRLLRDAEDLQKRLAVYQAGTREAAERGVSAVHERLGPLMMEGPLQAIPPSQQLRERAEAWGQKVRGRLESVGSQARDRLDDMRDQMEELKAKVEEQASQVRLQAEAFQTRLKSWFEPLVQDMQRQWASLVEKVQSTLGISPSTKPSKTK.

Positions 1–18 (MKFLWAALVVTLLAGCRA) are cleaved as a signal peptide. 8 repeat units span residues 75-96 (LLIEETMKEVKAYKEELEKQVG), 97-118 (PIAQETQARLSKELQAAQARLE), 119-140 (SDMEDVRTRLAQYRSEAQAALG), 141-162 (QNTDDLQGRLASHLRKLRKRLL), 163-184 (RDAEDLQKRLAVYQAGTREAAE), 185-206 (RGVSAVHERLGPLMMEGPLQAI), 207-224 (PPSQQLRERAEAWGQKVR), and 225-246 (GRLESVGSQARDRLDDMRDQME). Residues 75–246 (LLIEETMKEV…RLDDMRDQME (172 aa)) are 8 X 22 AA approximate tandem repeats. Positions 153–163 (HLRKLRKRLLR) are LDL and other lipoprotein receptors binding. Residue 157–160 (LRKR) coordinates heparin. Residues 205–281 (AIPPSQQLRE…SWFEPLVQDM (77 aa)) form a lipid-binding and lipoprotein association region. 220 to 227 (GQKVRGRL) lines the heparin pocket. The homooligomerization stretch occupies residues 257–308 (SQVRLQAEAFQTRLKSWFEPLVQDMQRQWASLVEKVQSTLGISPSTKPSKTK). A specificity for association with VLDL region spans residues 269 to 281 (RLKSWFEPLVQDM).

It belongs to the apolipoprotein A1/A4/E family. In terms of assembly, homotetramer. May interact with ABCA1; functionally associated with ABCA1 in the biogenesis of HDLs. May interact with APP/A4 amyloid-beta peptide; the interaction is extremely stable in vitro but its physiological significance is unclear. May interact with MAPT. May interact with MAP2. In the cerebrospinal fluid, interacts with secreted SORL1. Interacts with PMEL; this allows the loading of PMEL luminal fragment on ILVs to induce fibril nucleation. APOE exists as multiple glycosylated and sialylated glycoforms within cells and in plasma. The extent of glycosylation and sialylation are tissue and context specific. In terms of processing, glycated in plasma VLDL. Post-translationally, phosphorylated by FAM20C in the extracellular medium.

Its subcellular location is the secreted. It localises to the extracellular space. The protein localises to the extracellular matrix. The protein resides in the extracellular vesicle. It is found in the endosome. Its subcellular location is the multivesicular body. Functionally, APOE is an apolipoprotein, a protein associating with lipid particles, that mainly functions in lipoprotein-mediated lipid transport between organs via the plasma and interstitial fluids. APOE is a core component of plasma lipoproteins and is involved in their production, conversion and clearance. Apolipoproteins are amphipathic molecules that interact both with lipids of the lipoprotein particle core and the aqueous environment of the plasma. As such, APOE associates with chylomicrons, chylomicron remnants, very low density lipoproteins (VLDL) and intermediate density lipoproteins (IDL) but shows a preferential binding to high-density lipoproteins (HDL). It also binds a wide range of cellular receptors including the LDL receptor/LDLR and the very low-density lipoprotein receptor/VLDLR that mediate the cellular uptake of the APOE-containing lipoprotein particles. Finally, APOE also has a heparin-binding activity and binds heparan-sulfate proteoglycans on the surface of cells, a property that supports the capture and the receptor-mediated uptake of APOE-containing lipoproteins by cells. This chain is Apolipoprotein E (APOE), found in Pteropus vampyrus (Large flying fox).